A 203-amino-acid chain; its full sequence is MYEYLKGLVTAVNPYYVVLEVQGIGYQLQVANPYRYTESMSEVVQIFVHQAVRDTDITLFGFYDLDEKQLFQKLISVSGIGPKSALAILANSDHSGLIQAIMNDDIGYLTKFPGVGKKTAQQIALDLKGKLGDLEQSATLVGQTAIDLGSQGDSPELSDALAALSALGYSAREVKAITPKLTDFAAQTTDQYLREGLRLLMKK.

The domain I stretch occupies residues 1–63 (MYEYLKGLVT…DTDITLFGFY (63 aa)). The segment at 64-142 (DLDEKQLFQK…DLEQSATLVG (79 aa)) is domain II. The flexible linker stretch occupies residues 143–153 (QTAIDLGSQGD). Residues 153–203 (DSPELSDALAALSALGYSAREVKAITPKLTDFAAQTTDQYLREGLRLLMKK) are domain III.

This sequence belongs to the RuvA family. In terms of assembly, homotetramer. Forms an RuvA(8)-RuvB(12)-Holliday junction (HJ) complex. HJ DNA is sandwiched between 2 RuvA tetramers; dsDNA enters through RuvA and exits via RuvB. An RuvB hexamer assembles on each DNA strand where it exits the tetramer. Each RuvB hexamer is contacted by two RuvA subunits (via domain III) on 2 adjacent RuvB subunits; this complex drives branch migration. In the full resolvosome a probable DNA-RuvA(4)-RuvB(12)-RuvC(2) complex forms which resolves the HJ.

Its subcellular location is the cytoplasm. Its function is as follows. The RuvA-RuvB-RuvC complex processes Holliday junction (HJ) DNA during genetic recombination and DNA repair, while the RuvA-RuvB complex plays an important role in the rescue of blocked DNA replication forks via replication fork reversal (RFR). RuvA specifically binds to HJ cruciform DNA, conferring on it an open structure. The RuvB hexamer acts as an ATP-dependent pump, pulling dsDNA into and through the RuvAB complex. HJ branch migration allows RuvC to scan DNA until it finds its consensus sequence, where it cleaves and resolves the cruciform DNA. This chain is Holliday junction branch migration complex subunit RuvA, found in Latilactobacillus sakei subsp. sakei (strain 23K) (Lactobacillus sakei subsp. sakei).